The chain runs to 132 residues: CDGSH iron-sulfur domain-containing protein 2 homolog (132 aa).

At 1-35 (MEPISHVVKSSLPNYLSSLPIPDSFGGWFKLSFKD) the chain is on the lumenal side. A helical membrane pass occupies residues 36 to 58 (WLALIPPTVVVAGLGYTTYLAFC). The Cytoplasmic portion of the chain corresponds to 59-132 (PAARCAGKDS…NVGPVVVKKK (74 aa)). [2Fe-2S] cluster-binding residues include C98, C100, C109, and H113.

Belongs to the CISD protein family. CISD2 subfamily. It depends on [2Fe-2S] cluster as a cofactor.

It is found in the endoplasmic reticulum membrane. This Drosophila persimilis (Fruit fly) protein is CDGSH iron-sulfur domain-containing protein 2 homolog.